The primary structure comprises 184 residues: Dual specificity protein phosphatase 22 (184 aa).

Residue Gly2 is the site of N-myristoyl glycine attachment. One can recognise a Tyrosine-protein phosphatase domain in the interval 4–144 (GMNKILPGLY…LQEFEKHEVH (141 aa)). At Ser58 the chain carries Phosphoserine. Cys88 functions as the Phosphocysteine intermediate in the catalytic mechanism. A protein contacts are provided by Leu89, Ala90, Val92, Ser93, and Arg94.

The protein belongs to the protein-tyrosine phosphatase family. Non-receptor class dual specificity subfamily. As to quaternary structure, monomer. Interacts with LCK; the interaction is direct. Interacts with UBR2; the interaction is direct. In terms of processing, myristoylation regulates subcellular location, and is necessary for activation of JNK. In terms of tissue distribution, ubiquitous. Highest expression seen in heart, placenta, lung, liver, kidney and pancreas.

Its subcellular location is the cytoplasm. The enzyme catalyses O-phospho-L-tyrosyl-[protein] + H2O = L-tyrosyl-[protein] + phosphate. It catalyses the reaction O-phospho-L-seryl-[protein] + H2O = L-seryl-[protein] + phosphate. The catalysed reaction is O-phospho-L-threonyl-[protein] + H2O = L-threonyl-[protein] + phosphate. Dual specificity phosphatase; can dephosphorylate both phosphotyrosine and phosphoserine or phosphothreonine residues. Activates the JNK signaling pathway. Inhibits T-cell receptor signaling and T-cell mediated immune responses, acting, at least in part, by inducing degradation of E3 ubiquitin ligase UBR2. Dephosphorylates and thereby induces 'Lys-48'-linked ubiquitination of UBR2, leading to proteasomal degradation of UBR2. Dephosphorylates and thereby inactivates tyrosine kinase LCK. Inhibits UBR2-mediated 'Lys-63'-linked ubiquitination of LCK. May play a role in B-cell receptor (BCR) signaling and B-cell function. This chain is Dual specificity protein phosphatase 22 (DUSP22), found in Homo sapiens (Human).